The sequence spans 422 residues: SH2 domain-containing protein 4A (422 aa).

Phosphoserine occurs at positions 117 and 123. Disordered stretches follow at residues 141–190 (PQNV…EDEK) and 202–282 (SEWQ…VIRT). Basic and acidic residues-rich tracts occupy residues 163-190 (TKKDDKAQTKDLTKKKDSEELKQTEDEK) and 212-231 (KAADEKRRSLAKQAREDYKR). Position 233 is a phosphoserine (Ser-233). The SH2 domain occupies 316–408 (WFHGILTLKK…LGKELLLFPC (93 aa)).

Interacts with ESR1.

The protein localises to the cytoplasm. Inhibits estrogen-induced cell proliferation by competing with PLCG for binding to ESR1, blocking the effect of estrogen on PLCG and repressing estrogen-induced proliferation. May play a role in T-cell development and function. The protein is SH2 domain-containing protein 4A (Sh2d4a) of Rattus norvegicus (Rat).